The primary structure comprises 312 residues: Olfactory receptor 2M7 (312 aa).

Over 1–25 (MAWENQTFNSDFLLLGIFNHSPTHT) the chain is Extracellular. The N-linked (GlcNAc...) asparagine glycan is linked to N5. A helical membrane pass occupies residues 26–49 (FLFFLVLAIFSVAFMGNSIMVLLI). Topologically, residues 50–57 (YLDTQLHT) are cytoplasmic. The helical transmembrane segment at 58–79 (PMYFLLSQLSLMDLMLICTTVP) threads the bilayer. At 80-100 (KMAFNYLSGSKSISMAGCATQ) the chain is on the extracellular side. Cysteines 97 and 189 form a disulfide. The helical transmembrane segment at 101-120 (IFFYISLLGSECFLLAVMSY) threads the bilayer. Residues 121–139 (DRYTAICHPLRYTNLMRPK) lie on the Cytoplasmic side of the membrane. Residues 140 to 158 (ICGLMTAFSWILGSTDGII) traverse the membrane as a helical segment. At 159-195 (DAVATFSFSYCGSREIAHFCCDFPSLLILSCNDTSIF) the chain is on the extracellular side. A helical transmembrane segment spans residues 196-219 (EEVIFICCIVMLVFPVAIIITSYA). Over 220 to 236 (RVILAVIHMGSGEGRRK) the chain is Cytoplasmic. Residues 237–259 (AFTTCSSHLMVVGMYYGAGLFMC) form a helical membrane-spanning segment. Residues 260–272 (IQPTSHHSPMQDK) lie on the Extracellular side of the membrane. Residues 273-292 (MVSVFYTIVTPMLNPLIYSL) form a helical membrane-spanning segment. Residues 293–311 (RNKEVTRALMKILGKGKSG) lie on the Cytoplasmic side of the membrane.

It belongs to the G-protein coupled receptor 1 family.

It localises to the cell membrane. In terms of biological role, odorant receptor. This chain is Olfactory receptor 2M7 (OR2M7), found in Homo sapiens (Human).